The primary structure comprises 435 residues: Cyclic 2,3-diphosphoglycerate synthetase (435 aa).

This sequence belongs to the cyclic 2,3-diphosphoglycerate synthetase family.

The protein localises to the cytoplasm. It carries out the reaction (2R)-2,3-bisphosphoglycerate + ATP + H(+) = cyclic (2R)-2,3-bisphosphoglycerate + ADP + phosphate. Catalyzes the formation of cyclic 2,3-diphosphoglycerate (cDPG) by formation of an intramolecular phosphoanhydride bond at the expense of ATP. This is Cyclic 2,3-diphosphoglycerate synthetase from Pyrococcus horikoshii (strain ATCC 700860 / DSM 12428 / JCM 9974 / NBRC 100139 / OT-3).